Consider the following 149-residue polypeptide: Transcriptional repressor NrdR (149 aa).

Residues 3–34 fold into a zinc finger; it reads CPFCNADDTKVIDSRLVADGHQVRRRRECLVC. The ATP-cone domain occupies 49–139; the sequence is PRVIKSNGVR…VYRSFEDIRE (91 aa).

Belongs to the NrdR family. The cofactor is Zn(2+).

Negatively regulates transcription of bacterial ribonucleotide reductase nrd genes and operons by binding to NrdR-boxes. This is Transcriptional repressor NrdR from Tolumonas auensis (strain DSM 9187 / NBRC 110442 / TA 4).